The following is a 165-amino-acid chain: Bark lectin isoform 2 (165 aa).

Asn-27 and Asn-57 each carry an N-linked (GlcNAc...) asparagine glycan. 2 disulfide bridges follow: Cys-33-Cys-80 and Cys-126-Cys-133.

The protein belongs to the protease inhibitor I3 (leguminous Kunitz-type inhibitor) family. Dimer.

Glucose and N-acetylglucosamine binding lectin. Has hemagglutinating activity against human and rabbit erythrocytes which does not require divalent cations. Inhibits factor Xa and, to a lesser extent, trypsin. Does not inhibit neutrophil elastase, human plasma kallikrein, papain, human plasmin, porcine pancreatic kallikrein and bovin chymotrypsin. Has insecticidal activity against the termite species N.corniger. Induces apoptosis in prostrate cancer cell lines DU145 and PC3. The polypeptide is Bark lectin isoform 2 (Crateva tapia (Garlic-pear tree)).